Consider the following 291-residue polypeptide: Shikimate dehydrogenase (NADP(+)) (291 aa).

Residues 18–20 (SLS) and Thr-70 each bind shikimate. Lys-74 functions as the Proton acceptor in the catalytic mechanism. Shikimate contacts are provided by Asn-95 and Asp-110. NADP(+) is bound by residues 134–138 (GAGGA) and Val-228. Tyr-230 is a shikimate binding site. Gly-251 contacts NADP(+).

This sequence belongs to the shikimate dehydrogenase family. As to quaternary structure, homodimer.

It carries out the reaction shikimate + NADP(+) = 3-dehydroshikimate + NADPH + H(+). It functions in the pathway metabolic intermediate biosynthesis; chorismate biosynthesis; chorismate from D-erythrose 4-phosphate and phosphoenolpyruvate: step 4/7. Functionally, involved in the biosynthesis of the chorismate, which leads to the biosynthesis of aromatic amino acids. Catalyzes the reversible NADPH linked reduction of 3-dehydroshikimate (DHSA) to yield shikimate (SA). The chain is Shikimate dehydrogenase (NADP(+)) from Streptomyces avermitilis (strain ATCC 31267 / DSM 46492 / JCM 5070 / NBRC 14893 / NCIMB 12804 / NRRL 8165 / MA-4680).